The chain runs to 335 residues: Zinc-type alcohol dehydrogenase-like protein SAV2186 (335 aa).

This sequence belongs to the zinc-containing alcohol dehydrogenase family. Quinone oxidoreductase subfamily.

The polypeptide is Zinc-type alcohol dehydrogenase-like protein SAV2186 (Staphylococcus aureus (strain Mu50 / ATCC 700699)).